Consider the following 402-residue polypeptide: Beta-ketoacyl-[acyl-carrier-protein] synthase III B, chloroplastic (402 aa).

Active-site residues include C178, H328, and N358.

This sequence belongs to the thiolase-like superfamily. FabH family.

Its subcellular location is the plastid. It is found in the chloroplast. It carries out the reaction malonyl-[ACP] + acetyl-CoA + H(+) = 3-oxobutanoyl-[ACP] + CO2 + CoA. Its pathway is lipid metabolism; fatty acid biosynthesis. In terms of biological role, catalyzes the condensation reaction of fatty acid synthesis by the addition to an acyl acceptor of two carbons from malonyl-ACP. KAS III catalyzes the first condensation reaction which initiates fatty acid synthesis and may therefore play a role in governing the total rate of fatty acid production. Possesses both acetoacetyl-ACP synthase and acetyl transacylase activities. This Cuphea wrightii (Wright's waxweed) protein is Beta-ketoacyl-[acyl-carrier-protein] synthase III B, chloroplastic (KAS3B).